Consider the following 82-residue polypeptide: Putative membrane protein insertion efficiency factor (82 aa).

Positions 63–82 (PGGHDPVPESTILSKEKSVK) are disordered.

Belongs to the UPF0161 family.

It localises to the cell inner membrane. Could be involved in insertion of integral membrane proteins into the membrane. This Protochlamydia amoebophila (strain UWE25) protein is Putative membrane protein insertion efficiency factor.